The chain runs to 363 residues: 3-isopropylmalate dehydrogenase (363 aa).

78–91 (GKKWDYLPIESRPE) contacts NAD(+). Substrate contacts are provided by R99, R109, R138, and D227. The Mg(2+) site is built by D227, D251, and D255. 285–297 (GSAPDIEGKNIAN) provides a ligand contact to NAD(+).

The protein belongs to the isocitrate and isopropylmalate dehydrogenases family. LeuB type 1 subfamily. As to quaternary structure, homodimer. Mg(2+) is required as a cofactor. Requires Mn(2+) as cofactor.

Its subcellular location is the cytoplasm. It catalyses the reaction (2R,3S)-3-isopropylmalate + NAD(+) = 4-methyl-2-oxopentanoate + CO2 + NADH. It participates in amino-acid biosynthesis; L-leucine biosynthesis; L-leucine from 3-methyl-2-oxobutanoate: step 3/4. Its function is as follows. Catalyzes the oxidation of 3-carboxy-2-hydroxy-4-methylpentanoate (3-isopropylmalate) to 3-carboxy-4-methyl-2-oxopentanoate. The product decarboxylates to 4-methyl-2 oxopentanoate. This chain is 3-isopropylmalate dehydrogenase (leuB), found in Buchnera aphidicola subsp. Rhopalosiphum padi.